A 385-amino-acid chain; its full sequence is S-adenosylmethionine synthase (385 aa).

His-14 contacts ATP. Asp-16 serves as a coordination point for Mg(2+). Glu-42 is a K(+) binding site. Residues Glu-55 and Gln-98 each contribute to the L-methionine site. The interval 98–108 is flexible loop; sequence QSGDIAQAVDN. ATP contacts are provided by residues 165–167, 232–233, Asp-241, 247–248, Ala-264, and Lys-268; these read DAK, RF, and RK. L-methionine is bound at residue Asp-241. Residue Lys-272 coordinates L-methionine.

Belongs to the AdoMet synthase family. As to quaternary structure, homotetramer; dimer of dimers. Mg(2+) serves as cofactor. The cofactor is K(+).

It is found in the cytoplasm. The enzyme catalyses L-methionine + ATP + H2O = S-adenosyl-L-methionine + phosphate + diphosphate. The protein operates within amino-acid biosynthesis; S-adenosyl-L-methionine biosynthesis; S-adenosyl-L-methionine from L-methionine: step 1/1. Functionally, catalyzes the formation of S-adenosylmethionine (AdoMet) from methionine and ATP. The overall synthetic reaction is composed of two sequential steps, AdoMet formation and the subsequent tripolyphosphate hydrolysis which occurs prior to release of AdoMet from the enzyme. The sequence is that of S-adenosylmethionine synthase from Leuconostoc mesenteroides subsp. mesenteroides (strain ATCC 8293 / DSM 20343 / BCRC 11652 / CCM 1803 / JCM 6124 / NCDO 523 / NBRC 100496 / NCIMB 8023 / NCTC 12954 / NRRL B-1118 / 37Y).